A 296-amino-acid polypeptide reads, in one-letter code: MARYRNKVSCPAQCDPKLQSTGDTSWDSYATTMKTAFTPKRGMVPDLIRPKSTRRLGFTYSIGDPILNESQYHDEYTWKLRSKENMVKTGTSRGVWNHKTHPGQEFFQWTHPKGKQTQKLPWIEPPSEESIQNAVASQFISCTKRDFVDLTQSKKTMKRFPRSQDRKSLLPRPLDTEFRYNYQIPAQIPELKDFSFKYGCYASLPVASQGLVPSVLSSYIRNEERTKKQTTYECDYGKACLDFLTILDSFTPSQVHDYLQSVSYKDRQILERFIHSHCDIEAKPNKREKQSHRKRP.

Mn stretches follow at residues 30–42 (ATTM…PKRG), 69–83 (ESQY…LRSK), 140–153 (ISCT…LTQS), 175–189 (DTEF…AQIP), and 229–243 (QTTY…CLDF).

In Mus musculus (Mouse), this protein is Testis-expressed protein 26 (Tex26).